A 374-amino-acid chain; its full sequence is Protein-glutamate methylesterase/protein-glutamine glutaminase 1 (374 aa).

In terms of domain architecture, Response regulatory spans 4 to 121; it reads KVLVVDDSSF…ATNKDEAILL (118 aa). Residue Asp55 is modified to 4-aspartylphosphate. The tract at residues 141–170 is disordered; it reads PSVAPVTPRPTTGSAVGNATTPVQSASAPV. The span at 149–167 shows a compositional bias: polar residues; the sequence is RPTTGSAVGNATTPVQSAS. The CheB-type methylesterase domain occupies 174–374; the sequence is PLSSIRASGK…ESILKESARG (201 aa). Active-site residues include Ser193, His220, and Asp316.

It belongs to the CheB family. Post-translationally, phosphorylated by CheA. Phosphorylation of the N-terminal regulatory domain activates the methylesterase activity.

It is found in the cytoplasm. The enzyme catalyses [protein]-L-glutamate 5-O-methyl ester + H2O = L-glutamyl-[protein] + methanol + H(+). The catalysed reaction is L-glutaminyl-[protein] + H2O = L-glutamyl-[protein] + NH4(+). Involved in chemotaxis. Part of a chemotaxis signal transduction system that modulates chemotaxis in response to various stimuli. Catalyzes the demethylation of specific methylglutamate residues introduced into the chemoreceptors (methyl-accepting chemotaxis proteins or MCP) by CheR. Also mediates the irreversible deamidation of specific glutamine residues to glutamic acid. The sequence is that of Protein-glutamate methylesterase/protein-glutamine glutaminase 1 from Shewanella oneidensis (strain ATCC 700550 / JCM 31522 / CIP 106686 / LMG 19005 / NCIMB 14063 / MR-1).